The sequence spans 335 residues: Serine/threonine-protein kinase crk1 (335 aa).

The Protein kinase domain occupies 11–292; it reads YVKERKVGEG…AQQALEHHYF (282 aa). ATP contacts are provided by residues 17 to 25 and lysine 40; that span reads VGEGTYAVV. Aspartate 133 (proton acceptor) is an active-site residue. A Phosphoserine modification is found at serine 162. Serine 165 is modified (phosphoserine; by CAK). Serine 318 is modified (phosphoserine).

Belongs to the protein kinase superfamily. CMGC Ser/Thr protein kinase family. CDC2/CDKX subfamily. In terms of assembly, one of the nine subunits forming the core-TFIIH basal transcription factor. Interacts with mcs2 and tfb3.

The protein localises to the cytoplasm. The protein resides in the nucleus. It catalyses the reaction [DNA-directed RNA polymerase] + ATP = phospho-[DNA-directed RNA polymerase] + ADP + H(+). Functionally, protein kinase essential for cell proliferation, where it is required for completion of cytokinesis. Phosphorylates the C-terminal repeat domain (CTD) of RNA polymerase II. This chain is Serine/threonine-protein kinase crk1 (crk1), found in Schizosaccharomyces pombe (strain 972 / ATCC 24843) (Fission yeast).